The sequence spans 152 residues: 3-hydroxyacyl-[acyl-carrier-protein] dehydratase FabZ (152 aa).

His58 is an active-site residue.

Belongs to the thioester dehydratase family. FabZ subfamily.

The protein localises to the cytoplasm. The enzyme catalyses a (3R)-hydroxyacyl-[ACP] = a (2E)-enoyl-[ACP] + H2O. In terms of biological role, involved in unsaturated fatty acids biosynthesis. Catalyzes the dehydration of short chain beta-hydroxyacyl-ACPs and long chain saturated and unsaturated beta-hydroxyacyl-ACPs. This is 3-hydroxyacyl-[acyl-carrier-protein] dehydratase FabZ from Prochlorococcus marinus (strain AS9601).